A 521-amino-acid chain; its full sequence is Na(+)/H(+) antiporter ApNhaP (521 aa).

Residues M1–Q18 are Periplasmic-facing. Residues F19–F39 form a helical membrane-spanning segment. Over R40–Q41 the chain is Cytoplasmic. A helical transmembrane segment spans residues I42–L62. Residues V63–N94 lie on the Periplasmic side of the membrane. A helical membrane pass occupies residues L95–F115. The Cytoplasmic portion of the chain corresponds to S116 to P126. A helical membrane pass occupies residues I127–F147. The Periplasmic segment spans residues R148 to S164. The chain crosses the membrane as a helical span at residues L165–T185. The Cytoplasmic portion of the chain corresponds to Q186–L194. The helical transmembrane segment at I195–I215 threads the bilayer. The Periplasmic portion of the chain corresponds to S216–E245. The helical transmembrane segment at L246 to S266 threads the bilayer. The Cytoplasmic segment spans residues R267–L276. A helical membrane pass occupies residues L277 to I297. Topologically, residues G298–Q311 are periplasmic. Residues L312–G332 form a helical membrane-spanning segment. The Cytoplasmic portion of the chain corresponds to T333–T349. Residues V350 to V370 form a helical membrane-spanning segment. Over M371 to E380 the chain is Periplasmic. A helical membrane pass occupies residues A381–I401. The Cytoplasmic segment spans residues E402–E521.

Belongs to the monovalent cation:proton antiporter 1 (CPA1) transporter (TC 2.A.36) family.

Its subcellular location is the cell inner membrane. Its function is as follows. Na(+)/H(+) antiporter that extrudes sodium in exchange for external protons. Also shows high Ca(2+)/H(+) antiporter activity at alkaline pH. Does not catalyze exchange between Li(+) and H(+). The protein is Na(+)/H(+) antiporter ApNhaP (apnhaP) of Aphanothece halophytica.